Here is a 521-residue protein sequence, read N- to C-terminus: Occludin (521 aa).

The interval 1-20 (MSVRPFESPPPYRPDEFKPN) is disordered. Topologically, residues 1 to 66 (MSVRPFESPP…KWTSPPGVIR (66 aa)) are cytoplasmic. An MARVEL domain is found at 60–267 (SPPGVIRILS…IIFFAVKTRR (208 aa)). The chain crosses the membrane as a helical span at residues 67–89 (ILSMLIIVMCIAIFACVASTLAW). The Extracellular segment spans residues 90-133 (DRGYGTGLFGGSLNYPYSGFGYGGGYGGGYGGYGYGYGGYTDPR). A helical membrane pass occupies residues 134–158 (AAKGFLLAMAAFCFIASLVIFVTSV). At 159 to 168 (IRSGMSRTRR) the chain is on the cytoplasmic side. A helical transmembrane segment spans residues 169-193 (YYLIVIIVSAILGIMVFIATIVYIM). Topologically, residues 194-241 (GVNPTAQASGSMYGSQIYMICNQFYTPGGTGLYVDQYLYHYCVVDPQE) are extracellular. The cysteines at positions 214 and 235 are disulfide-linked. The chain crosses the membrane as a helical span at residues 242-263 (AIAIVLGFMIIVAFALIIFFAV). At 264-521 (KTRRKMDRYD…MVGDYDRRKP (258 aa)) the chain is on the cytoplasmic side. Residue S300 is modified to Phosphoserine. The tract at residues 300–329 (SAGTQDMPPPPSDYAERVDSPMAYSSNGKV) is disordered. T303 carries the phosphothreonine modification. 2 positions are modified to phosphoserine: S311 and S319. The residue at position 338 (S338) is a Phosphoserine; by PKC; in vitro. A Phosphoserine modification is found at S358. A disordered region spans residues 361–405 (DFRQPRYSSNGNLETPSKRAPTKGKAGKGKRTDPDHYETDYTTGG). Over residues 366 to 375 (RYSSNGNLET) the composition is skewed to polar residues. Y367 carries the post-translational modification Phosphotyrosine. A phosphoserine mark is found at S368 and S369. Basic residues predominate over residues 380-389 (APTKGKAGKG). Residues 390–399 (KRTDPDHYET) are compositionally biased toward basic and acidic residues. Phosphotyrosine is present on residues Y397 and Y401. At T402 the chain carries Phosphothreonine; by PKC/PRKCH. At T403 the chain carries Phosphothreonine. At S407 the chain carries Phosphoserine. Residues 413 to 521 (EDWVREYPPI…MVGDYDRRKP (109 aa)) enclose the OCEL domain. Residues 424 to 488 (SDQQRQLYKR…EYNRLKQVKG (65 aa)) adopt a coiled-coil conformation. S489 is subject to Phosphoserine.

Belongs to the ELL/occludin family. In terms of assembly, interacts with TJP1/ZO1. Interacts with VAPA. Interacts with CLDN1, CLDN6, CLDN9, CLDN11, CLDN12 and CLDN17. Interacts with PLSCR1. Interacts with LSR, ILDR1 and ILDR2. Interacts with TJP2/ZO2. In terms of processing, dephosphorylated by PTPRJ. May be phosphorylated by PKC during translocation to cell-cell contacts. Localized at tight junctions of both epithelial and endothelial cells. Highly expressed in the testis, kidney, lung, liver and brain. Not detected in skeletal muscle, spleen and heart.

Its subcellular location is the cell membrane. It is found in the cell junction. The protein resides in the tight junction. May play a role in the formation and regulation of the tight junction (TJ) paracellular permeability barrier. This chain is Occludin (Ocln), found in Mus musculus (Mouse).